A 301-amino-acid polypeptide reads, in one-letter code: Ribosomal protein L11 methyltransferase (301 aa).

Positions 146, 167, 189, and 237 each coordinate S-adenosyl-L-methionine.

The protein belongs to the methyltransferase superfamily. PrmA family.

It localises to the cytoplasm. The catalysed reaction is L-lysyl-[protein] + 3 S-adenosyl-L-methionine = N(6),N(6),N(6)-trimethyl-L-lysyl-[protein] + 3 S-adenosyl-L-homocysteine + 3 H(+). In terms of biological role, methylates ribosomal protein L11. In Prochlorococcus marinus (strain MIT 9313), this protein is Ribosomal protein L11 methyltransferase.